The chain runs to 488 residues: Adenylosuccinate synthetase 1, chloroplastic (488 aa).

The N-terminal 47 residues, 1 to 47 (MSLSTVNHAAAAAAAAAGPGKSFSAAAPAAPSVRLPRTRAPAAAAVS), are a transit peptide targeting the chloroplast. GTP is bound by residues 75 to 81 (GDEGKGK) and 103 to 105 (GHT). The active-site Proton acceptor is the aspartate 76. Residues aspartate 76 and glycine 103 each coordinate Mg(2+). IMP contacts are provided by residues 76–79 (DEGK), 101–104 (NAGH), threonine 193, arginine 207, glutamine 287, threonine 302, and arginine 366. The active-site Proton donor is the histidine 104. A substrate-binding site is contributed by 362 to 368 (TTTGRPR). GTP-binding positions include arginine 368, 394-396 (KLD), and 477-479 (GVG).

It belongs to the adenylosuccinate synthetase family. In terms of assembly, homodimer. Requires Mg(2+) as cofactor.

It is found in the plastid. Its subcellular location is the chloroplast. The enzyme catalyses IMP + L-aspartate + GTP = N(6)-(1,2-dicarboxyethyl)-AMP + GDP + phosphate + 2 H(+). Its pathway is purine metabolism; AMP biosynthesis via de novo pathway; AMP from IMP: step 1/2. In terms of biological role, plays an important role in the de novo pathway and in the salvage pathway of purine nucleotide biosynthesis. Catalyzes the first committed step in the biosynthesis of AMP from IMP. The protein is Adenylosuccinate synthetase 1, chloroplastic of Oryza sativa subsp. japonica (Rice).